The sequence spans 282 residues: Phosphatidylglycerol--prolipoprotein diacylglyceryl transferase (282 aa).

Helical transmembrane passes span 19 to 39 (IGPF…VFGW), 58 to 78 (ISLV…ILGG), and 104 to 124 (GGMS…WFAY). Position 149 (arginine 149) interacts with a 1,2-diacyl-sn-glycero-3-phospho-(1'-sn-glycerol). 3 consecutive transmembrane segments (helical) span residues 190-210 (AGME…LGAL), 214-234 (GMIL…GEHF), and 250-270 (MGML…VLAI).

The protein belongs to the Lgt family.

It localises to the cell inner membrane. The catalysed reaction is L-cysteinyl-[prolipoprotein] + a 1,2-diacyl-sn-glycero-3-phospho-(1'-sn-glycerol) = an S-1,2-diacyl-sn-glyceryl-L-cysteinyl-[prolipoprotein] + sn-glycerol 1-phosphate + H(+). The protein operates within protein modification; lipoprotein biosynthesis (diacylglyceryl transfer). Functionally, catalyzes the transfer of the diacylglyceryl group from phosphatidylglycerol to the sulfhydryl group of the N-terminal cysteine of a prolipoprotein, the first step in the formation of mature lipoproteins. The chain is Phosphatidylglycerol--prolipoprotein diacylglyceryl transferase from Bradyrhizobium diazoefficiens (strain JCM 10833 / BCRC 13528 / IAM 13628 / NBRC 14792 / USDA 110).